We begin with the raw amino-acid sequence, 149 residues long: UPF0306 protein PM1958 (149 aa).

Belongs to the UPF0306 family.

The sequence is that of UPF0306 protein PM1958 from Pasteurella multocida (strain Pm70).